The chain runs to 171 residues: Zinc uptake regulation protein (171 aa).

It belongs to the Fur family.

Its function is as follows. Acts as a negative controlling element, employing Zn(2+) as a cofactor to bind the operator of the repressed genes (znuACB). The protein is Zinc uptake regulation protein (zur) of Escherichia coli (strain K12).